We begin with the raw amino-acid sequence, 321 residues long: Cytochrome c biogenesis protein CcsA (321 aa).

Helical transmembrane passes span 9-29, 44-64, 71-91, 97-117, 143-163, 227-247, 261-275, and 288-308; these read ILTHISFSIVSIVITIYLMTL, GLIATFFCITGFLVIRWIYSG, LYESLMFLSWSFSIIHMVPYF, LLSTITAPSAIFTQGFATSGL, MILSYAALLCGSLLSIALLVI, VISLGFIFLTIGILSGAVWAN, TWAFITWTIFAIYLH, and AIVASIGFLIIWICYFGVNLL.

Belongs to the CcmF/CycK/Ccl1/NrfE/CcsA family. May interact with Ccs1.

It localises to the plastid. The protein resides in the chloroplast thylakoid membrane. In terms of biological role, required during biogenesis of c-type cytochromes (cytochrome c6 and cytochrome f) at the step of heme attachment. In Nandina domestica (Heavenly bamboo), this protein is Cytochrome c biogenesis protein CcsA.